Reading from the N-terminus, the 140-residue chain is Large ribosomal subunit protein uL13 (140 aa).

This sequence belongs to the universal ribosomal protein uL13 family. Part of the 50S ribosomal subunit.

Its function is as follows. This protein is one of the early assembly proteins of the 50S ribosomal subunit, although it is not seen to bind rRNA by itself. It is important during the early stages of 50S assembly. In Methanosarcina mazei (strain ATCC BAA-159 / DSM 3647 / Goe1 / Go1 / JCM 11833 / OCM 88) (Methanosarcina frisia), this protein is Large ribosomal subunit protein uL13.